A 156-amino-acid chain; its full sequence is ATP synthase subunit b (156 aa).

A helical transmembrane segment spans residues 5–25 (LTLIGQAIAFAFFVAFCMKFV).

Belongs to the ATPase B chain family. In terms of assembly, F-type ATPases have 2 components, F(1) - the catalytic core - and F(0) - the membrane proton channel. F(1) has five subunits: alpha(3), beta(3), gamma(1), delta(1), epsilon(1). F(0) has three main subunits: a(1), b(2) and c(10-14). The alpha and beta chains form an alternating ring which encloses part of the gamma chain. F(1) is attached to F(0) by a central stalk formed by the gamma and epsilon chains, while a peripheral stalk is formed by the delta and b chains.

Its subcellular location is the cell inner membrane. Functionally, f(1)F(0) ATP synthase produces ATP from ADP in the presence of a proton or sodium gradient. F-type ATPases consist of two structural domains, F(1) containing the extramembraneous catalytic core and F(0) containing the membrane proton channel, linked together by a central stalk and a peripheral stalk. During catalysis, ATP synthesis in the catalytic domain of F(1) is coupled via a rotary mechanism of the central stalk subunits to proton translocation. Component of the F(0) channel, it forms part of the peripheral stalk, linking F(1) to F(0). This chain is ATP synthase subunit b, found in Acinetobacter baumannii (strain AYE).